Here is a 419-residue protein sequence, read N- to C-terminus: Testin (419 aa).

The PET domain occupies 92–199 (MILTNPVAAK…GDVKLPSEMN (108 aa)). 2 disordered regions span residues 133–164 (EKQP…PSKC) and 199–222 (NAQG…GSKD). Over residues 155–164 (PAHDQDPSKC) the composition is skewed to basic and acidic residues. 3 consecutive LIM zinc-binding domains span residues 232–295 (YSCY…CDSE), 297–357 (PRCA…NHAV), and 360–419 (QGCH…KMMS).

Belongs to the prickle / espinas / testin family. In terms of assembly, interacts via LIM domain 1 with ZYX. Interacts (via LIM domain 3) with ENAH and VASP. Interacts with ALKBH4, talin, actin, alpha-actinin, GRIP1 and PXN. Interacts (via LIM domain 2) with ACTL7A (via N-terminus). Heterodimer with ACTL7A; the heterodimer interacts with ENAH to form a heterotrimer.

The protein resides in the cytoplasm. It is found in the cell junction. It localises to the focal adhesion. In terms of biological role, scaffold protein that may play a role in cell adhesion, cell spreading and in the reorganization of the actin cytoskeleton. Plays a role in the regulation of cell proliferation. May act as a tumor suppressor. The protein is Testin (Tes) of Rattus norvegicus (Rat).